The chain runs to 395 residues: Flap endonuclease 1 (395 aa).

The interval 1-104 (MGIKHLYQVI…GELAKRVARK (104 aa)) is N-domain. Asp-34 is a binding site for Mg(2+). 2 residues coordinate DNA: Arg-47 and Arg-70. Mg(2+) is bound by residues Asp-86, Glu-158, Glu-160, Asp-179, and Asp-181. The tract at residues 122 to 253 (DIEKFSRRTV…TTALSLIKEH (132 aa)) is I-domain. Glu-158 contributes to the DNA binding site. Residues Gly-231 and Asp-233 each coordinate DNA. Residue Asp-233 participates in Mg(2+) binding. The interval 341–349 (QQSRLEGFF) is interaction with PCNA. The tract at residues 345-395 (LEGFFKPVARTEDEKASLKRKHDEKLQQQKKKKKEDAKAKKEAKAKPRGAA) is disordered. Composition is skewed to basic and acidic residues over residues 353–371 (ARTEDEKASLKRKHDEKLQ) and 378–389 (KEDAKAKKEAKA).

The protein belongs to the XPG/RAD2 endonuclease family. FEN1 subfamily. As to quaternary structure, interacts with PCNA. Three molecules of fen1 bind to one PCNA trimer with each molecule binding to one PCNA monomer. PCNA stimulates the nuclease activity without altering cleavage specificity. Requires Mg(2+) as cofactor. Post-translationally, phosphorylated. Phosphorylation upon DNA damage induces relocalization to the nuclear plasma.

The protein resides in the nucleus. It localises to the nucleolus. Its subcellular location is the nucleoplasm. The protein localises to the mitochondrion. Functionally, structure-specific nuclease with 5'-flap endonuclease and 5'-3' exonuclease activities involved in DNA replication and repair. During DNA replication, cleaves the 5'-overhanging flap structure that is generated by displacement synthesis when DNA polymerase encounters the 5'-end of a downstream Okazaki fragment. It enters the flap from the 5'-end and then tracks to cleave the flap base, leaving a nick for ligation. Also involved in the long patch base excision repair (LP-BER) pathway, by cleaving within the apurinic/apyrimidinic (AP) site-terminated flap. Acts as a genome stabilization factor that prevents flaps from equilibrating into structures that lead to duplications and deletions. Also possesses 5'-3' exonuclease activity on nicked or gapped double-stranded DNA, and exhibits RNase H activity. Also involved in replication and repair of rDNA and in repairing mitochondrial DNA. In Penicillium rubens (strain ATCC 28089 / DSM 1075 / NRRL 1951 / Wisconsin 54-1255) (Penicillium chrysogenum), this protein is Flap endonuclease 1 (fen1).